A 440-amino-acid polypeptide reads, in one-letter code: Frizzled/smoothened-like sans CRD protein D (440 aa).

An N-terminal signal peptide occupies residues 1–27 (MFIILKFLISFFLICNFFNYNDHFASG). Residues 28 to 85 (QTLPPGFCPSPLIYRNSTNRQNDIENGYLFIGQTNCTSPCPSLIFSENEWHRVYNMSL) are Extracellular-facing. Residues Asn-43, Asn-62, and Asn-82 are each glycosylated (N-linked (GlcNAc...) asparagine). The chain crosses the membrane as a helical span at residues 86 to 106 (IAGTISMFALIFLIITYSPLV). Topologically, residues 107 to 110 (NKYN) are cytoplasmic. Residues 111-131 (GYTRHTVGILFLFCGIFLTVT) form a helical membrane-spanning segment. Over 132–162 (TDGRQLWDIDLGFEKYCPEPGRFARQSDTKC) the chain is Extracellular. Residues 163 to 183 (LVTAIFFQYGCVTSILWWAAI) form a helical membrane-spanning segment. The Cytoplasmic segment spans residues 184–200 (SVDLWMTIRKVKISKLQ). A helical membrane pass occupies residues 201-221 (FITYAVILNIITLILTFAPIA). At 222–244 (SKQYGYGEAAIGCWLMDLKYQVG) the chain is on the extracellular side. Residues 245-265 (YFWAPVGFCLCVGCVSIVLII) form a helical membrane-spanning segment. Residues 266–285 (REIYKVSDAIKKKLLAKHLK) are Cytoplasmic-facing. The helical transmembrane segment at 286–306 (PLMLIILMLSEFIYMFIFYSY) threads the bilayer. Residues 307 to 346 (TTSRRGHYHDVVEKYIRCLFINASNPSICEVDVSISSPAH) are Extracellular-facing. N-linked (GlcNAc...) asparagine glycosylation is present at Asn-328. The helical transmembrane segment at 347-367 (FFFHFCMRLMGIEGLIFFGFT) threads the bilayer. Over 368 to 440 (RQTKRIWLRS…IELSGVDSKN (73 aa)) the chain is Cytoplasmic. The segment at 395-428 (ISSDEKTSNSSHRTTRGCRETEFGESIEQSNDPE) is disordered.

The protein belongs to the G-protein coupled receptor Fz/Smo family.

The protein localises to the membrane. The chain is Frizzled/smoothened-like sans CRD protein D (fscD) from Dictyostelium discoideum (Social amoeba).